Here is a 334-residue protein sequence, read N- to C-terminus: Ornithine carbamoyltransferase (334 aa).

Carbamoyl phosphate contacts are provided by residues 57–60, Gln-84, Arg-108, and 135–138; these read STRT and HPTQ. L-ornithine-binding positions include Asn-169, Asp-233, and 237-238; that span reads SM. Carbamoyl phosphate contacts are provided by residues 275–276 and Arg-320; that span reads CL.

It belongs to the aspartate/ornithine carbamoyltransferase superfamily. OTCase family. In terms of assembly, homotrimer.

Its subcellular location is the cytoplasm. It catalyses the reaction carbamoyl phosphate + L-ornithine = L-citrulline + phosphate + H(+). Its pathway is amino-acid biosynthesis; L-arginine biosynthesis; L-arginine from L-ornithine and carbamoyl phosphate: step 1/3. Functionally, reversibly catalyzes the transfer of the carbamoyl group from carbamoyl phosphate (CP) to the N(epsilon) atom of ornithine (ORN) to produce L-citrulline. The chain is Ornithine carbamoyltransferase from Vibrio vulnificus (strain CMCP6).